We begin with the raw amino-acid sequence, 331 residues long: Tryptophan--tRNA ligase (331 aa).

ATP contacts are provided by residues 10 to 12 (QPS) and 18 to 19 (GN). The 'HIGH' region motif lies at 11-19 (PSGQLTLGN). Position 133 (D133) interacts with L-tryptophan. Residues 145-147 (GED), V184, and 193-197 (KMSKS) each bind ATP. Positions 193–197 (KMSKS) match the 'KMSKS' region motif.

It belongs to the class-I aminoacyl-tRNA synthetase family. As to quaternary structure, homodimer.

Its subcellular location is the cytoplasm. It carries out the reaction tRNA(Trp) + L-tryptophan + ATP = L-tryptophyl-tRNA(Trp) + AMP + diphosphate + H(+). Functionally, catalyzes the attachment of tryptophan to tRNA(Trp). The polypeptide is Tryptophan--tRNA ligase (Listeria monocytogenes serotype 4b (strain F2365)).